Here is a 158-residue protein sequence, read N- to C-terminus: Transcription elongation factor GreA (158 aa).

Belongs to the GreA/GreB family.

Its function is as follows. Necessary for efficient RNA polymerase transcription elongation past template-encoded arresting sites. The arresting sites in DNA have the property of trapping a certain fraction of elongating RNA polymerases that pass through, resulting in locked ternary complexes. Cleavage of the nascent transcript by cleavage factors such as GreA or GreB allows the resumption of elongation from the new 3'terminus. GreA releases sequences of 2 to 3 nucleotides. In Rhizobium johnstonii (strain DSM 114642 / LMG 32736 / 3841) (Rhizobium leguminosarum bv. viciae), this protein is Transcription elongation factor GreA.